The following is an 835-amino-acid chain: U-box domain-containing protein 35 (835 aa).

Disordered stretches follow at residues 1 to 22 (MSRSPDKLALPPPPPPPPSRTV), 177 to 303 (VRPS…SSNR), and 410 to 457 (EKEK…LEGT). Over residues 10–19 (LPPPPPPPPS) the composition is skewed to pro residues. Positions 195-218 (RTNSSSGSSGPTSDSSDVMSSAHD) are enriched in low complexity. Polar residues predominate over residues 269-282 (SSINRSSTDTTSRW). 2 stretches are compositionally biased toward basic and acidic residues: residues 285 to 295 (RRRDYEERKEA) and 410 to 455 (EKEK…EKLE). The stretch at 340–459 (QSYTDNQVNL…EKEKLEGTLG (120 aa)) forms a coiled coil. One can recognise a Protein kinase domain in the interval 480–745 (FSEELKIGMG…DLKDQILPAL (266 aa)). Residues 486–494 (IGMGAYGAV) and lysine 507 contribute to the ATP site. The Proton acceptor role is filled by aspartate 602. Positions 765–835 (QPPTHFICPL…TAIMEWRSTR (71 aa)) constitute a U-box domain.

Belongs to the protein kinase superfamily. Ser/Thr protein kinase family.

It catalyses the reaction L-seryl-[protein] + ATP = O-phospho-L-seryl-[protein] + ADP + H(+). The catalysed reaction is L-threonyl-[protein] + ATP = O-phospho-L-threonyl-[protein] + ADP + H(+). The enzyme catalyses S-ubiquitinyl-[E2 ubiquitin-conjugating enzyme]-L-cysteine + [acceptor protein]-L-lysine = [E2 ubiquitin-conjugating enzyme]-L-cysteine + N(6)-ubiquitinyl-[acceptor protein]-L-lysine.. It participates in protein modification; protein ubiquitination. Functionally, functions as an E3 ubiquitin ligase. This is U-box domain-containing protein 35 (PUB35) from Arabidopsis thaliana (Mouse-ear cress).